The sequence spans 283 residues: Pantothenate synthetase (283 aa).

Residue 30–37 coordinates ATP; that stretch reads MGNLHDGH. His-37 (proton donor) is an active-site residue. Gln-61 serves as a coordination point for (R)-pantoate. Gln-61 contributes to the beta-alanine binding site. ATP is bound at residue 149-152; sequence GEKD. A (R)-pantoate-binding site is contributed by Gln-155. 186–189 provides a ligand contact to ATP; that stretch reads LSSR.

Belongs to the pantothenate synthetase family. As to quaternary structure, homodimer.

The protein localises to the cytoplasm. The enzyme catalyses (R)-pantoate + beta-alanine + ATP = (R)-pantothenate + AMP + diphosphate + H(+). The protein operates within cofactor biosynthesis; (R)-pantothenate biosynthesis; (R)-pantothenate from (R)-pantoate and beta-alanine: step 1/1. In terms of biological role, catalyzes the condensation of pantoate with beta-alanine in an ATP-dependent reaction via a pantoyl-adenylate intermediate. This is Pantothenate synthetase from Escherichia coli O127:H6 (strain E2348/69 / EPEC).